A 1057-amino-acid chain; its full sequence is Probable E3 ubiquitin-protein ligase HERC4 (1057 aa).

RCC1 repeat units lie at residues methionine 1–aspartate 51, aspartate 52–aspartate 101, lysine 102–lysine 154, serine 156–leucine 207, serine 208–lysine 259, glycine 261–proline 311, and serine 313–arginine 366. In terms of domain architecture, HECT spans lysine 730–isoleucine 1057. Cysteine 1025 (glycyl thioester intermediate) is an active-site residue.

It is found in the cytoplasm. The protein resides in the cytosol. It catalyses the reaction S-ubiquitinyl-[E2 ubiquitin-conjugating enzyme]-L-cysteine + [acceptor protein]-L-lysine = [E2 ubiquitin-conjugating enzyme]-L-cysteine + N(6)-ubiquitinyl-[acceptor protein]-L-lysine.. It functions in the pathway protein modification; protein ubiquitination. Its function is as follows. Probable E3 ubiquitin-protein ligase involved in either protein trafficking or in the distribution of cellular structures. Required for spermatozoon maturation and fertility, and for the removal of the cytoplasmic droplet of the spermatozoon. E3 ubiquitin-protein ligases accept ubiquitin from an E2 ubiquitin-conjugating enzyme in the form of a thioester and then directly transfer it to targeted substrates. This Rattus norvegicus (Rat) protein is Probable E3 ubiquitin-protein ligase HERC4 (Herc4).